The following is a 469-amino-acid chain: Cytosolic beta-glucosidase (469 aa).

3 residues coordinate substrate: Q17, H120, and N164. E165 serves as the catalytic Proton donor. Y309 is a substrate binding site. The active-site Nucleophile is the E373. Substrate-binding positions include W417 and 424-425; that span reads EW.

This sequence belongs to the glycosyl hydrolase 1 family. Klotho subfamily. Post-translationally, the N-terminus is blocked. As to expression, present in hepatocytes (at protein level).

The protein resides in the cytoplasm. Its subcellular location is the cytosol. It carries out the reaction Hydrolysis of terminal, non-reducing beta-D-glucosyl residues with release of beta-D-glucose.. The enzyme catalyses a beta-D-glucosyl-(1&lt;-&gt;1')-N-acylsphing-4-enine + H2O = an N-acylsphing-4-enine + D-glucose. It catalyses the reaction a beta-D-galactosyl-(1&lt;-&gt;1')-N-acylsphing-4-enine + H2O = an N-acylsphing-4-enine + D-galactose. The catalysed reaction is beta-D-glucosyl-(1&lt;-&gt;1)-sphing-4-enine + H2O = sphing-4-enine + D-glucose. It carries out the reaction beta-D-glucosyl-(1&lt;-&gt;1)-N-octadecanoylsphing-4-enine + H2O = N-octadecanoylsphing-4-enine + D-glucose. The enzyme catalyses beta-D-galactosyl-(1&lt;-&gt;1)-sphing-4-enine + H2O = sphing-4-enine + D-galactose. It catalyses the reaction beta-D-galactosyl-(1&lt;-&gt;1')-N-octadecanoylsphing-4-enine + H2O = N-octadecanoylsphing-4-enine + D-galactose. The catalysed reaction is a beta-D-xylosyl-(1&lt;-&gt;1')-N-acylsphing-4-enine + cholesterol = cholesteryl 3-beta-D-xyloside + an N-acylsphing-4-enine. Inhibited by 2,4-dinitrophenyl-2-fluoro-2-deoxy-beta-D-glucopyranoside. In terms of biological role, neutral cytosolic beta-glycosidase with a broad substrate specificity that could play a role in the catabolism of glycosylceramides. Has a significant glucosylceramidase activity in vitro. However, that activity is relatively low and its significance in vivo is not clear. Hydrolyzes galactosylceramide/GalCer, glucosylsphingosine/GlcSph and galactosylsphingosine/GalSph. However, the in vivo relevance of these activities is unclear. It can also hydrolyze a broad variety of dietary glycosides including phytoestrogens, flavonols, flavones, flavanones and cyanogens in vitro and could therefore play a role in the metabolism of xenobiotics. Possesses transxylosylase activity in vitro using xylosylated ceramides/XylCers (such as beta-D-xylosyl-(1&lt;-&gt;1')-N-acylsphing-4-enine) as xylosyl donors and cholesterol as acceptor. Could also play a role in the catabolism of cytosolic sialyl free N-glycans. The sequence is that of Cytosolic beta-glucosidase from Cavia porcellus (Guinea pig).